Reading from the N-terminus, the 150-residue chain is Profilin (150 aa).

The protein belongs to the profilin family. In terms of assembly, occurs in many kinds of cells as a complex with monomeric actin in a 1:1 ratio.

It localises to the cytoplasm. It is found in the cytoskeleton. Binds to actin and affects the structure of the cytoskeleton. At high concentrations, profilin prevents the polymerization of actin, whereas it enhances it at low concentrations. By binding to PIP2, it inhibits the formation of IP3 and DG. The sequence is that of Profilin from Trypanosoma brucei brucei.